The sequence spans 336 residues: Tryptophan--tRNA ligase 1 (336 aa).

ATP-binding positions include K9 to T11 and G17 to N18. The short motif at P10–N18 is the 'HIGH' region element. D137 serves as a coordination point for L-tryptophan. Residues G149 to D151, V188, and K197 to S201 each bind ATP. Positions K197–S201 match the 'KMSKS' region motif.

The protein belongs to the class-I aminoacyl-tRNA synthetase family. In terms of assembly, homodimer.

Its subcellular location is the cytoplasm. It catalyses the reaction tRNA(Trp) + L-tryptophan + ATP = L-tryptophyl-tRNA(Trp) + AMP + diphosphate + H(+). Functionally, catalyzes the attachment of tryptophan to tRNA(Trp). The polypeptide is Tryptophan--tRNA ligase 1 (Streptomyces coelicolor (strain ATCC BAA-471 / A3(2) / M145)).